The following is a 145-amino-acid chain: Small ribosomal subunit protein uS9 (145 aa).

The protein belongs to the universal ribosomal protein uS9 family.

The protein resides in the cytoplasm. This is Small ribosomal subunit protein uS9 (RPS16) from Gossypium hirsutum (Upland cotton).